The following is a 450-amino-acid chain: Phosphoglucosamine mutase (450 aa).

Catalysis depends on Ser97, which acts as the Phosphoserine intermediate. Positions 97, 236, 238, and 240 each coordinate Mg(2+). Ser97 is modified (phosphoserine).

This sequence belongs to the phosphohexose mutase family. Mg(2+) serves as cofactor. Activated by phosphorylation.

It catalyses the reaction alpha-D-glucosamine 1-phosphate = D-glucosamine 6-phosphate. Its function is as follows. Catalyzes the conversion of glucosamine-6-phosphate to glucosamine-1-phosphate. This Prochlorococcus marinus (strain AS9601) protein is Phosphoglucosamine mutase.